Reading from the N-terminus, the 105-residue chain is Fe-S protein maturation auxiliary factor PG_1777 (105 aa).

The protein belongs to the Fe-S cluster assembly domain superfamily. MIP18-like family. Putative homodimer; may be disulfide-linked.

Iron binding protein that protects DNA from Fenton chemistry-mediated damage caused by hydrogen peroxide induced oxidative stress. May be involved in iron-sulfur cluster assembly. The chain is Fe-S protein maturation auxiliary factor PG_1777 from Porphyromonas gingivalis (strain ATCC BAA-308 / W83).